The primary structure comprises 311 residues: AT-hook motif nuclear-localized protein 27 (311 aa).

Positions 40 to 105 are disordered; sequence HHHQHQQHQQ…KNKAKPPIIV (66 aa). Residues 55–75 are compositionally biased toward basic and acidic residues; the sequence is DDSRESDHSNKDHHQQGRPDS. Residues 86–98 constitute a DNA-binding region (a.T hook); sequence KRPRGRPPGSKNK. A PPC domain is found at 110 to 258; that stretch reads PNALRSHVLE…EEGGGGGGGG (149 aa). Residues 178–183 form a required for the binding to non-AHL interactors region; the sequence is GRFEIL. A disordered region spans residues 246–311; the sequence is EEEEEGGGGG…GAGTPSRPPF (66 aa). Residues 252–262 show a composition bias toward gly residues; the sequence is GGGGGGGGGGP. Over residues 263–277 the composition is skewed to low complexity; it reads PQMQQAPSASPPSGV. A compositionally biased stretch (gly residues) spans 278-292; the sequence is TGQGQLGGNVGGYGF.

Homodimer. Interacts with AHL12, AHL25, AHL29, TCP4, TCP13, EF114, ATAF2/NAC081, histone H2B.1, histone H3.3 and histone H4. In terms of tissue distribution, expressed in the hypocotyl and the vascular tissue of seedling.

Its subcellular location is the nucleus. Transcription factor that specifically binds AT-rich DNA sequences related to the nuclear matrix attachment regions (MARs). Negatively regulates plant innate immunity (PTI) to pathogens through the down-regulation of the PAMP-triggered FRK1 expression. Acts redundantly with AHL18, AHL22 and AHL29 in the regulation of flowering and regulation of the hypocotyl elongation. Acts as a chromatin remodeling factor that negatively regulates the leaf senescence. Acts redundantly with AHL29/SOB3 to modulate hypocotyl growth inhibition in response to light. The chain is AT-hook motif nuclear-localized protein 27 from Arabidopsis thaliana (Mouse-ear cress).